The following is a 381-amino-acid chain: UDP-N-acetylglucosamine--N-acetylmuramyl-(pentapeptide) pyrophosphoryl-undecaprenol N-acetylglucosamine transferase (381 aa).

Residues 10-12 (TGG), Asn-124, Arg-165, Ser-207, Ile-263, and Gln-308 each bind UDP-N-acetyl-alpha-D-glucosamine.

This sequence belongs to the glycosyltransferase 28 family. MurG subfamily.

The protein localises to the cell inner membrane. It catalyses the reaction di-trans,octa-cis-undecaprenyl diphospho-N-acetyl-alpha-D-muramoyl-L-alanyl-D-glutamyl-meso-2,6-diaminopimeloyl-D-alanyl-D-alanine + UDP-N-acetyl-alpha-D-glucosamine = di-trans,octa-cis-undecaprenyl diphospho-[N-acetyl-alpha-D-glucosaminyl-(1-&gt;4)]-N-acetyl-alpha-D-muramoyl-L-alanyl-D-glutamyl-meso-2,6-diaminopimeloyl-D-alanyl-D-alanine + UDP + H(+). Its pathway is cell wall biogenesis; peptidoglycan biosynthesis. Functionally, cell wall formation. Catalyzes the transfer of a GlcNAc subunit on undecaprenyl-pyrophosphoryl-MurNAc-pentapeptide (lipid intermediate I) to form undecaprenyl-pyrophosphoryl-MurNAc-(pentapeptide)GlcNAc (lipid intermediate II). This Trichlorobacter lovleyi (strain ATCC BAA-1151 / DSM 17278 / SZ) (Geobacter lovleyi) protein is UDP-N-acetylglucosamine--N-acetylmuramyl-(pentapeptide) pyrophosphoryl-undecaprenol N-acetylglucosamine transferase.